Consider the following 192-residue polypeptide: Cytochrome c oxidase assembly protein CtaG (192 aa).

At M1–T9 the chain is on the cytoplasmic side. Residues A10–F30 form a helical; Signal-anchor for type II membrane protein membrane-spanning segment. Residues Y31 to N192 are Periplasmic-facing.

Belongs to the COX11/CtaG family.

It localises to the cell inner membrane. Functionally, exerts its effect at some terminal stage of cytochrome c oxidase synthesis, probably by being involved in the insertion of the copper B into subunit I. In Cereibacter sphaeroides (strain ATCC 17025 / ATH 2.4.3) (Rhodobacter sphaeroides), this protein is Cytochrome c oxidase assembly protein CtaG.